Reading from the N-terminus, the 122-residue chain is Large ribosomal subunit protein uL22 (122 aa).

The disordered stretch occupies residues 102–122 (VAEGKEMKSSKSHKKNQAEGK).

Belongs to the universal ribosomal protein uL22 family. In terms of assembly, part of the 50S ribosomal subunit.

Its function is as follows. This protein binds specifically to 23S rRNA; its binding is stimulated by other ribosomal proteins, e.g. L4, L17, and L20. It is important during the early stages of 50S assembly. It makes multiple contacts with different domains of the 23S rRNA in the assembled 50S subunit and ribosome. The globular domain of the protein is located near the polypeptide exit tunnel on the outside of the subunit, while an extended beta-hairpin is found that lines the wall of the exit tunnel in the center of the 70S ribosome. This is Large ribosomal subunit protein uL22 from Helicobacter pylori (strain G27).